The sequence spans 209 residues: Uracil phosphoribosyltransferase (209 aa).

5-phospho-alpha-D-ribose 1-diphosphate is bound by residues Arg-79, Arg-104, and 131–139 (DPMLATGGS). Uracil-binding positions include Ile-194 and 199–201 (GDA). Asp-200 contacts 5-phospho-alpha-D-ribose 1-diphosphate.

The protein belongs to the UPRTase family. Mg(2+) is required as a cofactor.

The enzyme catalyses UMP + diphosphate = 5-phospho-alpha-D-ribose 1-diphosphate + uracil. It functions in the pathway pyrimidine metabolism; UMP biosynthesis via salvage pathway; UMP from uracil: step 1/1. Allosterically activated by GTP. Catalyzes the conversion of uracil and 5-phospho-alpha-D-ribose 1-diphosphate (PRPP) to UMP and diphosphate. In Clostridioides difficile (strain 630) (Peptoclostridium difficile), this protein is Uracil phosphoribosyltransferase.